Consider the following 181-residue polypeptide: Cyclic phosphodiesterase (181 aa).

His42 (proton donor/acceptor) is an active-site residue. Position 44 (Thr44) interacts with substrate. Disulfide bonds link Cys64-Cys177 and Cys104-Cys110. Catalysis depends on His119, which acts as the Proton donor/acceptor. Ser121 and Tyr124 together coordinate substrate.

This sequence belongs to the 2H phosphoesterase superfamily. CPD1 family. As to expression, expressed in leaves, stems, roots, floral buds and germinating seeds.

Its subcellular location is the cytoplasm. The catalysed reaction is ADP-alpha-D-ribose 1'',2''-cyclic phosphate + H2O = ADP-alpha-D-ribose 1''-phosphate + H(+). The enzyme catalyses 2',3'-cyclophospho-AMP + H2O = adenosine 2'-phosphate + H(+). It carries out the reaction 2',3'-cyclophospho-GMP + H2O = guanosine 2'-phosphate + H(+). It catalyses the reaction 2',3'-cyclophospho-UMP + H2O = uridine 2'-phosphate + H(+). The catalysed reaction is 2',3'-cyclophospho-CMP + H2O = cytidine 2'-phosphate + H(+). Inhibited by Cu(2+) and Zn(2+) at 0.5 mM by 93 and 87% respectively. Not inhibited by Ca(2+), Mg(2+), Co(2+), Ni(2+), and EDTA at 0.5 mM. Its function is as follows. Hydrolyzes ADP-ribose 1'',2''-cyclic phosphate (Appr&gt;1) that is produced during tRNA splicing into ADP-ribose 1''-phosphate (Appr-1''p). Also acts on nucleoside 2',3'-cyclic phosphates. This Arabidopsis thaliana (Mouse-ear cress) protein is Cyclic phosphodiesterase.